The following is a 152-amino-acid chain: Small ribosomal subunit protein bS6 (152 aa).

The tract at residues His-96 to Ala-152 is disordered.

It belongs to the bacterial ribosomal protein bS6 family.

Functionally, binds together with bS18 to 16S ribosomal RNA. The sequence is that of Small ribosomal subunit protein bS6 from Rhizobium etli (strain ATCC 51251 / DSM 11541 / JCM 21823 / NBRC 15573 / CFN 42).